The sequence spans 143 residues: Host transcription reprogramming factor 8 (143 aa).

The first 19 residues, 1–19 (MHTYKFIQIALLFASVALA), serve as a signal peptide directing secretion. Over residues 24–34 (PSPPNPPPVPQ) the composition is skewed to pro residues. A disordered region spans residues 24-43 (PSPPNPPPVPQLPNSETKSN). Residues 48 to 71 (HSCEFCGVVKPSGPAYLEHYHQNH) form a C2H2-type 1 zinc finger. The tract at residues 77-99 (GKLATPSPPNPPPVPTQKVETHA) is disordered. The span at 82 to 91 (PSPPNPPPVP) shows a compositional bias: pro residues. The C2H2-type 2 zinc-finger motif lies at 103 to 126 (HGCEWCNKVEPSGPAYIKHYKENH).

Its subcellular location is the secreted. The protein resides in the host nucleus. Functionally, probable secreted effector that translocates into the nuclei of host cells to reprogram the expression of targeted genes by binding on effector binding elements in rice. The protein is Host transcription reprogramming factor 8 of Pyricularia oryzae (strain 70-15 / ATCC MYA-4617 / FGSC 8958) (Rice blast fungus).